A 388-amino-acid polypeptide reads, in one-letter code: MKFIDEASIRVEAGDGGSGCVSFRREKYVPDGGPDGGDGGDGGSVFLQADENYNTLIDYRFERFHMAERGSNGRGRDCTGHGGVDLILKVPVGTRAVDDETQELIGDLTAHGQKLLVAKGGFHGLGNTRFKSSTNRAPRQKTLGTPGEVRSLRLELLLLADVGLLGMPNAGKSTFIRAVSRATPKVADYPFTTLVPNLGVVNPRPGQSFVIADIPGLIEGASDGAGLGIRFLKHLERCRVLLHILDIDPIDGSSPAEAAKAIVAELEKYSPKLAAKPRWLVFNKTDLMLEEDLQERVDAIVAEMDWQGDVYTMSAFNRIGTKELSLKLLDYIASLPPIDDSIDPDSEVEFKWDNYHEANTDSVNEDYNDDFDDDFDDDDYDVEVIYQR.

In terms of domain architecture, Obg spans 1-159; that stretch reads MKFIDEASIR…RSLRLELLLL (159 aa). Residues 160-333 enclose the OBG-type G domain; it reads ADVGLLGMPN…LSLKLLDYIA (174 aa). GTP is bound by residues 166-173, 191-195, 213-216, 283-286, and 314-316; these read GMPNAGKS, FTTLV, DIPG, NKTD, and SAF. Ser173 and Thr193 together coordinate Mg(2+).

This sequence belongs to the TRAFAC class OBG-HflX-like GTPase superfamily. OBG GTPase family. Monomer. Mg(2+) is required as a cofactor.

It localises to the cytoplasm. In terms of biological role, an essential GTPase which binds GTP, GDP and possibly (p)ppGpp with moderate affinity, with high nucleotide exchange rates and a fairly low GTP hydrolysis rate. Plays a role in control of the cell cycle, stress response, ribosome biogenesis and in those bacteria that undergo differentiation, in morphogenesis control. In Shewanella denitrificans (strain OS217 / ATCC BAA-1090 / DSM 15013), this protein is GTPase Obg.